Here is a 148-residue protein sequence, read N- to C-terminus: Lysozyme-like protein 6 (148 aa).

The first 19 residues, 1–19 (MTKALLIYLVSSFLALNQA), serve as a signal peptide directing secretion. A C-type lysozyme domain is found at 20–148 (SLISRCDLAQ…FYWLTGCRLR (129 aa)). 4 disulfide bridges follow: C25–C145, C49–C133, C83–C98, and C94–C112. Residues E54 and D71 contribute to the active site.

The protein belongs to the glycosyl hydrolase 22 family. Monomer. In terms of tissue distribution, expressed in testis, epididymis and spermatozoa (at protein level). Expressed in late-stage spermatocytes and round spermatids.

It is found in the secreted. The protein resides in the cell surface. The protein localises to the cell projection. It localises to the cilium. Its subcellular location is the flagellum. The catalysed reaction is Hydrolysis of (1-&gt;4)-beta-linkages between N-acetylmuramic acid and N-acetyl-D-glucosamine residues in a peptidoglycan and between N-acetyl-D-glucosamine residues in chitodextrins.. May be involved sperm-egg plasma membrane adhesion and fusion during fertilization. Exhibits bacteriolytic activity in vitro against Micrococcus luteus and Staphylococcus aureus. Shows weak bacteriolytic activity against Gram-positive bacteria at physiological pH. Bacteriolytic activity is pH-dependent, with a maximum at around pH 5.6. This is Lysozyme-like protein 6 (LYZL6) from Homo sapiens (Human).